A 679-amino-acid chain; its full sequence is Probable metal-nicotianamine transporter YSL18 (679 aa).

The segment covering Met1–Phe17 has biased composition (basic and acidic residues). The tract at residues Met1–Pro21 is disordered. The next 14 helical transmembrane spans lie at Val29–Met49, Leu51–Phe71, Cys101–Met121, Phe144–Pro164, Leu211–Phe231, Val255–Ile275, Val309–Leu329, Phe379–Tyr399, Val407–Val427, Ile441–Ile461, Val497–Phe517, Leu547–Ala567, Phe593–Trp613, and Val627–Ala647.

Belongs to the YSL (TC 2.A.67.2) family.

The protein resides in the membrane. Its function is as follows. May be involved in the transport of nicotianamine-chelated metals. The sequence is that of Probable metal-nicotianamine transporter YSL18 (YSL18) from Oryza sativa subsp. japonica (Rice).